A 518-amino-acid polypeptide reads, in one-letter code: ATP synthase F(1) complex catalytic subunit beta, mitochondrial (518 aa).

ADP contacts are provided by G199, V200, G201, K202, T203, and V204. Residue G199 coordinates ATP. Phosphate contacts are provided by G199, V200, G201, K202, and T203. Positions 201, 202, 203, and 204 each coordinate ATP. T203 is a Mg(2+) binding site. Residue E228 participates in Mg(2+) binding. R229 is a binding site for ATP.

Belongs to the ATPase alpha/beta chains family. Homotrimer. Component of the ATP synthase complex composed at least of ATP5F1A/subunit alpha, ATP5F1B/subunit beta, ATP5MC1/subunit c (homooctomer), MT-ATP6/subunit a, MT-ATP8/subunit 8, ATP5ME/subunit e, ATP5MF/subunit f, ATP5MG/subunit g, ATP5MK/subunit k, ATP5MJ/subunit j, ATP5F1C/subunit gamma, ATP5F1D/subunit delta, ATP5F1E/subunit epsilon, ATP5PF/subunit F6, ATP5PB/subunit b, ATP5PD/subunit d, ATP5PO/subunit OSCP. ATP synthase complex consists of a soluble F(1) head domain (subunits alpha(3) and beta(3)) - the catalytic core - and a membrane F(0) domain - the membrane proton channel (subunits c, a, 8, e, f, g, k and j). These two domains are linked by a central stalk (subunits gamma, delta, and epsilon) rotating inside the F1 region and a stationary peripheral stalk (subunits F6, b, d, and OSCP).

The protein resides in the mitochondrion inner membrane. It catalyses the reaction ATP + H2O + 4 H(+)(in) = ADP + phosphate + 5 H(+)(out). In terms of biological role, catalytic subunit beta, of the mitochondrial membrane ATP synthase complex (F(1)F(0) ATP synthase or Complex V) that produces ATP from ADP in the presence of a proton gradient across the membrane which is generated by electron transport complexes of the respiratory chain. ATP synthase complex consist of a soluble F(1) head domain - the catalytic core - and a membrane F(1) domain - the membrane proton channel. These two domains are linked by a central stalk rotating inside the F(1) region and a stationary peripheral stalk. During catalysis, ATP synthesis in the catalytic domain of F(1) is coupled via a rotary mechanism of the central stalk subunits to proton translocation. In vivo, can only synthesize ATP although its ATP hydrolase activity can be activated artificially in vitro. With the subunit alpha (ATP5F1A), forms the catalytic core in the F(1) domain. The chain is ATP synthase F(1) complex catalytic subunit beta, mitochondrial from Cyprinus carpio (Common carp).